We begin with the raw amino-acid sequence, 123 residues long: DNA-directed RNA polymerase I subunit RPA12 (123 aa).

Residues cysteine 17, cysteine 20, cysteine 35, cysteine 38, cysteine 84, and cysteine 87 each coordinate Zn(2+). Residues 17–38 form a C4-type zinc finger; it reads CPDCGSVLPLPGVQDAVACTRC. The segment at 80–120 adopts a TFIIS-type zinc-finger fold; the sequence is VDRRCSRCGHEGMAYHTRQMRSADEGQTVFYTCTNCKFQEK. A Hairpin motif is present at residues 103-104; sequence DE. Residues cysteine 112 and cysteine 115 each contribute to the Zn(2+) site.

Belongs to the archaeal RpoM/eukaryotic RPA12/RPB9/RPC11 RNA polymerase family. As to quaternary structure, component of the RNA polymerase I (Pol I) complex consisting of at least 13 subunits.

Its subcellular location is the nucleus. It localises to the nucleolus. Its function is as follows. Core component of RNA polymerase I (Pol I), a DNA-dependent RNA polymerase which synthesizes ribosomal RNA precursors using the four ribonucleoside triphosphates as substrates. Can mediate Pol I proofreading of the nascent RNA transcript. Anchors into the Pol I active site to monitor transcription fidelity and cleave mis-incorporated 5'-ribonucleotides. This chain is DNA-directed RNA polymerase I subunit RPA12, found in Bos taurus (Bovine).